Here is a 294-residue protein sequence, read N- to C-terminus: Putative ribose uptake protein RbsU (294 aa).

The next 10 helical transmembrane spans lie at 5–24 (ALLIGLGPLLGWGLYPTIAS), 34–56 (ILGSTIGTLIFALIYAWVQGIAF), 61–80 (NLWFSILSGIGWASAQIVTF), 90–112 (RAMPITTAFQLLGASLWGVFALG), 121–138 (VLGGLALVGIIIGAWLTV), 153–170 (QAVIWLAVGEIGYWAYSA), 182–204 (AFVPQAIGMVIVSIVYALFLASR), 214–236 (VSYTHIISGFFFAFAALTYLISA), 243–265 (LATGFILSQTSVVLATLTGIWFL), and 275–292 (WVTIGGLILIIAAAAVTV).

It belongs to the GRP transporter (TC 2.A.7.5) family.

The protein resides in the cell membrane. Its function is as follows. Could be involved in the uptake of ribose. The protein is Putative ribose uptake protein RbsU (rbsU) of Lactiplantibacillus plantarum (strain ATCC BAA-793 / NCIMB 8826 / WCFS1) (Lactobacillus plantarum).